Here is a 237-residue protein sequence, read N- to C-terminus: Ribosomal RNA small subunit methyltransferase G (237 aa).

Residues G78, F83, 129-130 (AE), and R148 contribute to the S-adenosyl-L-methionine site.

Belongs to the methyltransferase superfamily. RNA methyltransferase RsmG family.

Its subcellular location is the cytoplasm. Specifically methylates the N7 position of a guanine in 16S rRNA. The chain is Ribosomal RNA small subunit methyltransferase G from Streptococcus pyogenes serotype M3 (strain ATCC BAA-595 / MGAS315).